The primary structure comprises 77 residues: Conotoxin S6.11 (77 aa).

The first 19 residues, 1 to 19 (MEKLTILLLVAAVLMSTQA), serve as a signal peptide directing secretion. A propeptide spanning residues 20–50 (LIQGGLDERQKAKSNFFSKRKSNAESWWEGE) is cleaved from the precursor. Intrachain disulfides connect Cys51-Cys65, Cys58-Cys69, and Cys64-Cys74.

The protein belongs to the conotoxin O2 superfamily. Expressed by the venom duct.

It localises to the secreted. The protein is Conotoxin S6.11 of Conus striatus (Striated cone).